The sequence spans 332 residues: DNA-directed RNA polymerase subunit alpha (332 aa).

An alpha N-terminal domain (alpha-NTD) region spans residues 1–230; that stretch reads MKKITTSAYM…KQMSIFNNVL (230 aa). The tract at residues 246 to 332 is alpha C-terminal domain (alpha-CTD); that stretch reads EHSKLLESVE…LRKKISELKS (87 aa).

It belongs to the RNA polymerase alpha chain family. Homodimer. The RNAP catalytic core consists of 2 alpha, 1 beta, 1 beta' and 1 omega subunit. When a sigma factor is associated with the core the holoenzyme is formed, which can initiate transcription.

The catalysed reaction is RNA(n) + a ribonucleoside 5'-triphosphate = RNA(n+1) + diphosphate. Its function is as follows. DNA-dependent RNA polymerase catalyzes the transcription of DNA into RNA using the four ribonucleoside triphosphates as substrates. This is DNA-directed RNA polymerase subunit alpha from Campylobacter fetus subsp. fetus (strain 82-40).